A 229-amino-acid chain; its full sequence is MNIEEMKKIAAKEALKFIEDDMVIGLGTGSTTAYFIRLLGDMIKKGEVSDIVGVPTSYQSRLLAIESGIPVATLDQVDAIDVAVDGADEVDPNLNLIKGRGAALTMEKIIESRAGMFIVLVDERKLVDYLCQKMPVPIEVIPQAWRAIVEELSIFNAEAKLRMGVNKDGPVITDNGNFIIDAKFPRIDDPLDMEIELNTIPGVVENGIFADIADIVIVGTKEGVKTLER.

Residues 28-31, 85-88, and 98-101 contribute to the substrate site; these read TGST, DGAD, and KGRG. Glutamate 107 functions as the Proton acceptor in the catalytic mechanism. Lysine 125 provides a ligand contact to substrate.

It belongs to the ribose 5-phosphate isomerase family. As to quaternary structure, homodimer.

The enzyme catalyses aldehydo-D-ribose 5-phosphate = D-ribulose 5-phosphate. Its pathway is carbohydrate degradation; pentose phosphate pathway; D-ribose 5-phosphate from D-ribulose 5-phosphate (non-oxidative stage): step 1/1. Its function is as follows. Catalyzes the reversible conversion of ribose-5-phosphate to ribulose 5-phosphate. This Pyrococcus abyssi (strain GE5 / Orsay) protein is Ribose-5-phosphate isomerase A.